A 419-amino-acid chain; its full sequence is tRNA (guanine-N(7)-)-methyltransferase non-catalytic subunit wuho (419 aa).

A compositionally biased stretch (low complexity) spans 51–61; sequence STAEQQSAAAE. The segment at 51–75 is disordered; it reads STAEQQSAAAETGGGSVVEGEEPKD. 3 WD repeats span residues 87 to 127, 174 to 213, and 217 to 255; these read APTV…AQLV, GHLSIVYDILWTGDQQHIITSDRDDKIRVTNYPATFDIHS, and GHKEFVSGLALLSDEHICSVSGDKTLRVWNFKAGKELLR.

Belongs to the WD repeat TRM82 family. As to quaternary structure, forms a heterodimer with the catalytic subunit Mettl1. Interacts with mei-P26 and weakly interacts with bgcn; required for the function or formation of the mei-P26-bgcn-bam-sxl complex. Interacts with nanos; may be involved in mei-P26-dependent derepression of the BMP signaling pathway. Interacts with Myc; the interaction may be mediated by mei-P26 and may be involved in the regulation of ribosome biogenesis. As to expression, in testis, it is present at high level in hub cells, a niche for germline stem cells of testis. Ubiquitously expressed in all testicular cells throughout spermatogenesis. Ubiquitously expressed in all germline and somatic cells of the ovary.

The protein resides in the nucleus. Its subcellular location is the cytoplasm. The protein operates within tRNA modification; N(7)-methylguanine-tRNA biosynthesis. In terms of biological role, required for the Mettl1-dependent formation of N(7)-methylguanine at position 46 (m7G46) in tRNA. In the Mettl1-wuho methyltransferase complex, it is required to stabilize and induce conformational changes of the catalytic subunit. Required for binding of nanos mRNA and repression of translation by the mei-P26-bgcn-bam-sxl complex. May cooperate with mei-P26 and nanos to derepress the BMP signaling pathway. May cooperate with mei-P26 to suppress expression of a subset of microRNAs. May cooperate with mei-P26 to regulate bam expression levels in germline cells during gametogenesis. Required to promote mitosis to meiosis transition during gametogenesis. May regulate germline cell division in part by regulating ribosome biogenesis. This chain is tRNA (guanine-N(7)-)-methyltransferase non-catalytic subunit wuho, found in Drosophila willistoni (Fruit fly).